The primary structure comprises 197 residues: MATEEFRGHAVRMSTQGSQPGAAPDSVAGTAGLPSGQSGGAGLRLGERPPPAMEKRGPYLVTRAPSIQAKLKKHRDHAKAVLRRKGMLGALTNRPDSSGKRSVKFNKGYTALSQSPDENLVSLDSDSDGELESRYSSGYSSAEQVNQDVSRQLLQDGYHLDEIPDDEDLDLIPPKPIASSACSCCWCCLGDSSCTLQ.

2 disordered regions span residues 1-77 (MATE…HRDH) and 117-142 (DENL…YSSA). A phosphoserine mark is found at S14, S125, and S127.

The protein belongs to the FAM219 family.

The protein is Protein FAM219B (Fam219b) of Mus musculus (Mouse).